The sequence spans 161 residues: Arachidonate 5-lipoxygenase-activating protein (161 aa).

Over 1 to 8 (MDQETVGN) the chain is Lumenal. The helical transmembrane segment at 9 to 30 (VVLLAIVTLISVVQNGFFAHKV) threads the bilayer. Residues 31–52 (EHESRTQNGRSFQRTGTLAFER) are Cytoplasmic-facing. The chain crosses the membrane as a helical span at residues 53–77 (VYTANQNCVDAYPTFLAVLWSAGLL). Residues 78-80 (CSQ) are Lumenal-facing. Residues 81–102 (VPAAFAGLMYLLVRQKYFVGYL) form a helical membrane-spanning segment. The Cytoplasmic segment spans residues 103–107 (GERTQ). Residues 108–115 (STPGYIFG) lie within the membrane without spanning it. A helical membrane pass occupies residues 116 to 128 (KRIILFLFLMSVA). Over 129-161 (GIFNYYLIFFFGSDFENYIKTVTTTISPLLLIP) the chain is Lumenal.

This sequence belongs to the MAPEG family. Homotrimer. Interacts with LTC4S and ALOX5.

The protein resides in the nucleus membrane. The protein localises to the endoplasmic reticulum membrane. Its function is as follows. Required for leukotriene biosynthesis by ALOX5 (5-lipoxygenase). Anchors ALOX5 to the membrane. Binds arachidonic acid, and could play an essential role in the transfer of arachidonic acid to ALOX5. Binds to MK-886, a compound that blocks the biosynthesis of leukotrienes. The sequence is that of Arachidonate 5-lipoxygenase-activating protein (ALOX5AP) from Macaca fascicularis (Crab-eating macaque).